The chain runs to 1172 residues: Ras guanine nucleotide exchange factor W (1172 aa).

Low complexity-rich tracts occupy residues 34 to 70 and 78 to 87; these read PIYT…LNNL and NSNSVNNTIS. Disordered regions lie at residues 34-100, 138-162, and 186-246; these read PIYT…RSNT, KFLD…RIQQ, and FKRS…EIKD. Positions 194–241 are enriched in low complexity; it reads QPPQSQSQQQQQLQLQQQQQQSMPNLSLGNNINSNNNNNNGSENNDIS. Transmembrane regions (helical) follow at residues 286 to 306, 320 to 340, 347 to 367, 378 to 400, 432 to 452, and 545 to 565; these read IWLT…DIIG, IMAV…LNLF, FPGT…VTDI, VLSI…ISLI, LTTN…QLLV, and ILHL…NLLI. The stretch at 666-702 forms a coiled coil; the sequence is LLGMLNEIDDSLQAAKEKVEEESIQNSILKKDIEDLY. The N-terminal Ras-GEF domain occupies 765–903; sequence DLNVIQYATI…YIDSIHKRKM (139 aa). The 233-residue stretch at 938–1170 folds into the Ras-GEF domain; sequence DISDIAIQIT…WKMSLSCEQR (233 aa).

It localises to the membrane. Its function is as follows. Promotes the exchange of Ras-bound GDP by GTP. The polypeptide is Ras guanine nucleotide exchange factor W (gefW) (Dictyostelium discoideum (Social amoeba)).